The chain runs to 689 residues: UvrABC system protein C (689 aa).

Residues 1–19 are compositionally biased toward polar residues; it reads MTSDSSDTAKQIGSGQPSG. A disordered region spans residues 1–59; the sequence is MTSDSSDTAKQIGSGQPSGSPADMRRRDGVAPEQEVDPASLETDEDDEARLPDLPDEPV. The segment covering 42–59 has biased composition (acidic residues); the sequence is ETDEDDEARLPDLPDEPV. Residues 83 to 161 enclose the GIY-YIG domain; the sequence is TSPGVYRMMN…IKQLRPRFNV (79 aa). The region spanning 271-306 is the UVR domain; that stretch reads RAVKEDLARAMEQAAADLAFERAALYRDRLAALSAI.

The protein belongs to the UvrC family. Interacts with UvrB in an incision complex.

It localises to the cytoplasm. Functionally, the UvrABC repair system catalyzes the recognition and processing of DNA lesions. UvrC both incises the 5' and 3' sides of the lesion. The N-terminal half is responsible for the 3' incision and the C-terminal half is responsible for the 5' incision. This is UvrABC system protein C from Nitrobacter winogradskyi (strain ATCC 25391 / DSM 10237 / CIP 104748 / NCIMB 11846 / Nb-255).